The chain runs to 688 residues: Glycine--tRNA ligase beta subunit (688 aa).

Belongs to the class-II aminoacyl-tRNA synthetase family. As to quaternary structure, tetramer of two alpha and two beta subunits.

Its subcellular location is the cytoplasm. It catalyses the reaction tRNA(Gly) + glycine + ATP = glycyl-tRNA(Gly) + AMP + diphosphate. The polypeptide is Glycine--tRNA ligase beta subunit (glyS) (Haemophilus influenzae (strain ATCC 51907 / DSM 11121 / KW20 / Rd)).